The primary structure comprises 121 residues: Immunoglobulin kappa variable 4-1 (121 aa).

The N-terminal stretch at 1–20 (MVLQTQVFISLLLWISGAYG) is a signal peptide. Positions 21-43 (DIVMTQSPDSLAVSLGERATINC) are framework-1. The Ig-like domain occupies 21–121 (DIVMTQSPDS…YYCQQYYSTP (101 aa)). An intrachain disulfide couples Cys43 to Cys114. Residues 44–60 (KSSQSVLYSSNNKNYLA) form a complementarity-determining-1 region. A framework-2 region spans residues 61-75 (WYQQKPGQPPKLLIY). The segment at 76 to 82 (WASTRES) is complementarity-determining-2. Residues 83–114 (GVPDRFSGSGSGTDFTLTISSLQAEDVAVYYC) are framework-3. A complementarity-determining-3 region spans residues 115–121 (QQYYSTP).

Immunoglobulins are composed of two identical heavy chains and two identical light chains; disulfide-linked.

It localises to the secreted. The protein resides in the cell membrane. V segment of the variable domain of immunoglobulins light chain that participates in the antigen recognition. Immunoglobulins, also known as antibodies, are membrane-bound or secreted glycoproteins produced by B lymphocytes. In the recognition phase of humoral immunity, the membrane-bound immunoglobulins serve as receptors which, upon binding of a specific antigen, trigger the clonal expansion and differentiation of B lymphocytes into immunoglobulins-secreting plasma cells. Secreted immunoglobulins mediate the effector phase of humoral immunity, which results in the elimination of bound antigens. The antigen binding site is formed by the variable domain of one heavy chain, together with that of its associated light chain. Thus, each immunoglobulin has two antigen binding sites with remarkable affinity for a particular antigen. The variable domains are assembled by a process called V-(D)-J rearrangement and can then be subjected to somatic hypermutations which, after exposure to antigen and selection, allow affinity maturation for a particular antigen. In Homo sapiens (Human), this protein is Immunoglobulin kappa variable 4-1.